The chain runs to 219 residues: MTESHIDFRRAKFLISAPDIAHLDQYLPGDVGVEIAFAGRSNAGKSSALNALTEQKNLARTSKTPGRTQLINVFELDAQRRLVDLPGYGFAQVPLAMKLKWQQSLGEYLQKRACLSGVVVLMDIRHPLKDLDMQMIEWAVASEIPVLALLTKSDKLAQSAKMKTVNEVRKALVEFGDWVQVEPFSALKGTGKPKVLSILNEWCHPQWLADELENQDDAE.

The 175-residue stretch at 31 to 205 folds into the EngB-type G domain; it reads VGVEIAFAGR…LSILNEWCHP (175 aa). GTP-binding positions include 39 to 46, 66 to 70, 84 to 87, 151 to 154, and 184 to 186; these read GRSNAGKS, GRTQL, DLPG, TKSD, and FSA. Residues S46 and T68 each contribute to the Mg(2+) site.

It belongs to the TRAFAC class TrmE-Era-EngA-EngB-Septin-like GTPase superfamily. EngB GTPase family. Mg(2+) serves as cofactor.

In terms of biological role, necessary for normal cell division and for the maintenance of normal septation. The polypeptide is Probable GTP-binding protein EngB (Shewanella sp. (strain ANA-3)).